Consider the following 513-residue polypeptide: MQLNSTEISELIKQRIAQFNVVSEAHNEGTIVSVSDGIIRIHGLAEVMQGEMIALPGNRFAIALNLERDSVGAVVMGPYADLAEGMKVKCTGRILEVPVGRGLLGRVVNTLGEPIDGKGAVEHDGFSPVEMIAPGVIDRQSVDQPVQTGYKSVDAMIPIGRGQRELIIGDRQTGKTALAVDAIINQRDSGIKCIYVAIGQKASTISNVVRKLEEHGALENTIVVVASASESAALQYLAPYAGCAMGEYFRDRGEDALIIYDDLSKQAVAYRQISLLLRRPPGREAYPGDVFYLHSRLLERAARVSAEYVENFTNGEVKGKTGSLTALPIIETQAGDVSAFVPTNVISITDGQIFLESNLFNAGIRPAVNPGISVSRVGGAAQTKIMKKLSGGIRTALAQYRELAAFSQFASDLDDATRKQLNHGQKVTELLKQKQYEPMSVAQQSLSLFAAERGYLEDVEISKVVPFEAALLAYASREHADLLKEINQTGTYNEEIEAKLKGVLDNFKATQSW.

Residue 169–176 (GDRQTGKT) coordinates ATP.

It belongs to the ATPase alpha/beta chains family. In terms of assembly, F-type ATPases have 2 components, CF(1) - the catalytic core - and CF(0) - the membrane proton channel. CF(1) has five subunits: alpha(3), beta(3), gamma(1), delta(1), epsilon(1). CF(0) has three main subunits: a(1), b(2) and c(9-12). The alpha and beta chains form an alternating ring which encloses part of the gamma chain. CF(1) is attached to CF(0) by a central stalk formed by the gamma and epsilon chains, while a peripheral stalk is formed by the delta and b chains.

The protein localises to the cell inner membrane. It catalyses the reaction ATP + H2O + 4 H(+)(in) = ADP + phosphate + 5 H(+)(out). Functionally, produces ATP from ADP in the presence of a proton gradient across the membrane. The alpha chain is a regulatory subunit. In Proteus mirabilis (strain HI4320), this protein is ATP synthase subunit alpha.